A 387-amino-acid chain; its full sequence is Succinate--CoA ligase [ADP-forming] subunit beta (387 aa).

Residues Lys46, 53–55 (GRG), Glu99, Ala102, and Glu107 each bind ATP. Mg(2+) contacts are provided by Asn199 and Asp213. Substrate-binding positions include Asn264 and 321-323 (GIV).

Belongs to the succinate/malate CoA ligase beta subunit family. Heterotetramer of two alpha and two beta subunits. Requires Mg(2+) as cofactor.

It catalyses the reaction succinate + ATP + CoA = succinyl-CoA + ADP + phosphate. The catalysed reaction is GTP + succinate + CoA = succinyl-CoA + GDP + phosphate. It participates in carbohydrate metabolism; tricarboxylic acid cycle; succinate from succinyl-CoA (ligase route): step 1/1. Its function is as follows. Succinyl-CoA synthetase functions in the citric acid cycle (TCA), coupling the hydrolysis of succinyl-CoA to the synthesis of either ATP or GTP and thus represents the only step of substrate-level phosphorylation in the TCA. The beta subunit provides nucleotide specificity of the enzyme and binds the substrate succinate, while the binding sites for coenzyme A and phosphate are found in the alpha subunit. The protein is Succinate--CoA ligase [ADP-forming] subunit beta of Campylobacter jejuni subsp. jejuni serotype O:23/36 (strain 81-176).